Consider the following 433-residue polypeptide: V-type ATP synthase beta chain (433 aa).

This sequence belongs to the ATPase alpha/beta chains family.

In terms of biological role, produces ATP from ADP in the presence of a proton gradient across the membrane. The V-type beta chain is a regulatory subunit. This chain is V-type ATP synthase beta chain, found in Borrelia turicatae (strain 91E135).